Here is a 79-residue protein sequence, read N- to C-terminus: Acyl carrier protein (79 aa).

The Carrier domain occupies 2–77; it reads SDTAERVKKI…DAIDFINQKT (76 aa). At S37 the chain carries O-(pantetheine 4'-phosphoryl)serine.

It belongs to the acyl carrier protein (ACP) family. In terms of processing, 4'-phosphopantetheine is transferred from CoA to a specific serine of apo-ACP by AcpS. This modification is essential for activity because fatty acids are bound in thioester linkage to the sulfhydryl of the prosthetic group.

It is found in the cytoplasm. It functions in the pathway lipid metabolism; fatty acid biosynthesis. Functionally, carrier of the growing fatty acid chain in fatty acid biosynthesis. In Rhodospirillum centenum (strain ATCC 51521 / SW), this protein is Acyl carrier protein.